The primary structure comprises 343 residues: Zinc finger CCCH domain-containing protein 39 (343 aa).

Residues 114-147 adopt a coiled-coil conformation; the sequence is LSHLADAADEAAALRQENAELRVANNDLACRIAK. 2 consecutive C3H1-type zinc fingers follow at residues 268–296 and 306–334; these read MFKT…HGVA and RYKT…HSIT.

The sequence is that of Zinc finger CCCH domain-containing protein 39 from Oryza sativa subsp. japonica (Rice).